We begin with the raw amino-acid sequence, 339 residues long: MQKINQTSAMPEKTDVHWSGRFSVAPMLDWTDRHCRYFLRLLSRNTLLYTEMVTTGAIIHGKGDYLAYSEEEHPVALQLGGSDPAALAQCAKLAEARGYDEINLNVGCPSDRVQNGMFGACLMGNAQLVADCVKAMRDVVSIPVTVKTRIGIDDQDSYEFLCDFINTVSGKGECEMFIIHARKAWLSGLSPKENREIPPLDYPRVYQLKRDFPHLTMSINGGIKSLEEAKAHLQHMDGVMVGREAYQNPGILAAVDREIFGSSDTDADPVAVVRAMYPYIEHELSQGTYLGHIIRHMLGLFQGIPGARQWRRYLSENAHKAGADINVLEHALKLVADKR.

FMN is bound by residues 26–28 (PML) and Q78. The active-site Proton donor is the C108. Residues K147, H180, 220-222 (NGG), and 242-243 (GR) contribute to the FMN site.

This sequence belongs to the Dus family. DusA subfamily. Requires FMN as cofactor.

The enzyme catalyses 5,6-dihydrouridine(20) in tRNA + NADP(+) = uridine(20) in tRNA + NADPH + H(+). It carries out the reaction 5,6-dihydrouridine(20) in tRNA + NAD(+) = uridine(20) in tRNA + NADH + H(+). It catalyses the reaction 5,6-dihydrouridine(20a) in tRNA + NADP(+) = uridine(20a) in tRNA + NADPH + H(+). The catalysed reaction is 5,6-dihydrouridine(20a) in tRNA + NAD(+) = uridine(20a) in tRNA + NADH + H(+). Its function is as follows. Catalyzes the synthesis of 5,6-dihydrouridine (D), a modified base found in the D-loop of most tRNAs, via the reduction of the C5-C6 double bond in target uridines. Specifically modifies U20 and U20a in tRNAs. The sequence is that of tRNA-dihydrouridine(20/20a) synthase from Shigella flexneri.